Here is a 318-residue protein sequence, read N- to C-terminus: MNTRGSGSSSSSSSSQASLMAFSEPPKPASQPSPPSSPMSERPPSGRSRRRAQEPGRFLGVRRRPWGRYAAEIRDPTTKERHWLGTFDTAQEAALAYDRAALSMKGAQARTNFVYTHAAYNYPPFLAPFHAPQYAAAAAAPSSVQYGGGVGAAPHIGSYGHHHHHHHHHGHGAASGASSVGECSTMPVMVPVDPHRSSMSSSLLDMDRNGHDFLFSGADDNSGYLSSVVPESCLRPRGGGAAADHQDMRRYSDADAYGMMGLREDVDDLAQMVAGFWGGGDAADQLGACGFPASGGAADMVASSQGSDSYSPFSFLSH.

Low complexity predominate over residues 1–15; it reads MNTRGSGSSSSSSSS. 2 disordered regions span residues 1–59 and 158–178; these read MNTR…GRFL and SYGH…SGAS. Residues 25-37 are compositionally biased toward pro residues; sequence PPKPASQPSPPSS. Residues 57–114 constitute a DNA-binding region (AP2/ERF); sequence RFLGVRRRPWGRYAAEIRDPTTKERHWLGTFDTAQEAALAYDRAALSMKGAQARTNFV. Over residues 160 to 171 the composition is skewed to basic residues; sequence GHHHHHHHHHGH.

It belongs to the AP2/ERF transcription factor family. ERF subfamily.

It localises to the nucleus. In terms of biological role, required to prevent the formation of axillary meristems within the spikelet meristem and permit the subsequent establishment of floral meristem identity. Mediates the transition from spikelet to floret meristem. Determines the transition from panicle branching to spikelet formation. May specify floral organ identity by regulating the class B genes (Agamous-like genes) MADS6 and MADS17, as well as class E genes MADS1, MADS7 and MADS8 in floral meristem. Possesses transactivation activity. This Oryza sativa subsp. japonica (Rice) protein is Ethylene-responsive transcription factor FZP.